The following is a 247-amino-acid chain: Segregation and condensation protein A (247 aa).

The protein belongs to the ScpA family. As to quaternary structure, component of a cohesin-like complex composed of ScpA, ScpB and the Smc homodimer, in which ScpA and ScpB bind to the head domain of Smc. The presence of the three proteins is required for the association of the complex with DNA.

It is found in the cytoplasm. Participates in chromosomal partition during cell division. May act via the formation of a condensin-like complex containing Smc and ScpB that pull DNA away from mid-cell into both cell halves. In Bacillus cereus (strain 03BB102), this protein is Segregation and condensation protein A.